The sequence spans 89 residues: UPF0298 protein GK1096 (89 aa).

This sequence belongs to the UPF0298 family.

It localises to the cytoplasm. This Geobacillus kaustophilus (strain HTA426) protein is UPF0298 protein GK1096.